Consider the following 507-residue polypeptide: Lysine--tRNA ligase (507 aa).

E406 and E413 together coordinate Mg(2+).

The protein belongs to the class-II aminoacyl-tRNA synthetase family. Homodimer. The cofactor is Mg(2+).

The protein localises to the cytoplasm. It catalyses the reaction tRNA(Lys) + L-lysine + ATP = L-lysyl-tRNA(Lys) + AMP + diphosphate. The sequence is that of Lysine--tRNA ligase from Wolinella succinogenes (strain ATCC 29543 / DSM 1740 / CCUG 13145 / JCM 31913 / LMG 7466 / NCTC 11488 / FDC 602W) (Vibrio succinogenes).